We begin with the raw amino-acid sequence, 200 residues long: Probable DNA-directed RNA polymerase subunit delta (200 aa).

The HTH HARE-type domain maps to 19–88; sequence LSMIEVARAI…GDNKWGLRSW (70 aa). Acidic residues-rich tracts occupy residues 125-143 and 150-200; these read DSDA…DAYE and YDDE…TSEE. Residues 125-200 are disordered; the sequence is DSDAIDYNAD…SDDDAETSEE (76 aa).

The protein belongs to the RpoE family. As to quaternary structure, RNAP is composed of a core of 2 alpha, a beta and a beta' subunits. The core is associated with a delta subunit and one of several sigma factors.

Functionally, participates in both the initiation and recycling phases of transcription. In the presence of the delta subunit, RNAP displays an increased specificity of transcription, a decreased affinity for nucleic acids, and an increased efficiency of RNA synthesis because of enhanced recycling. The chain is Probable DNA-directed RNA polymerase subunit delta from Streptococcus pneumoniae serotype 4 (strain ATCC BAA-334 / TIGR4).